We begin with the raw amino-acid sequence, 152 residues long: MTSTLNTLKSNSGSRKKKLRKGRGIAAGQGASCGFGMRGQKSRSGRPTRPGFEGGQMPLYRRVPKLKHFEIINQKNFSIINLEKLNDFKDNDTVNIDSLVKKGLIFKPKFPLKILGNGKINVKLKVQAHAFTKVAKQKIEAAGGSCELINNK.

Residues 1–57 (MTSTLNTLKSNSGSRKKKLRKGRGIAAGQGASCGFGMRGQKSRSGRPTRPGFEGGQM) are disordered. Positions 14–23 (SRKKKLRKGR) are enriched in basic residues. Residues 25–37 (IAAGQGASCGFGM) show a composition bias toward gly residues.

The protein belongs to the universal ribosomal protein uL15 family. Part of the 50S ribosomal subunit.

In terms of biological role, binds to the 23S rRNA. This chain is Large ribosomal subunit protein uL15, found in Prochlorococcus marinus (strain MIT 9215).